A 193-amino-acid polypeptide reads, in one-letter code: Cerebellin-1 (193 aa).

A signal peptide spans 1-21 (MLGVVELLLLGAAWLAGPARG). An N-linked (GlcNAc...) asparagine glycan is attached at N23. Residues 34-38 (CLVVC) form an essential for interaction with NRXN1 and linker of two C1q trimers into disulfide-linked hexamers region. In terms of domain architecture, C1q spans 57–193 (SGSAKVAFSA…TFSGFLVFPL (137 aa)). The necessary for interaction with CBLN3, and homotrimerization stretch occupies residues 62–193 (VAFSAIRSTN…TFSGFLVFPL (132 aa)). Residue N79 is glycosylated (N-linked (GlcNAc...) asparagine). The segment at 122–147 (YNRQTIQVSLMLNGWPVISAFAGDQD) is essential for interaction with GRID2.

In terms of assembly, homohexamer; disulfide-linked homotrimers. The trimers are assembled via the globular C1q domains. The trimers associate via N-terminal cysteine residues to form disulfide-linked hexamers. May form oligomers with CBLN2, CBLN3 and CBLN4 prior to secretion. Once secreted, does not interact with other CBLN family members. Interacts with GRID1. Interacts with NRXN1 and NRXN2 long (alpha) and short (beta) isoforms produced by alternative promoter usage. Competes with NLGN1 for NRXN1-binding. Weakly interacts with NRXN3 short isoform and not at all with NRXN3 long isoform. Interacts (via C1q domain) with GRID2; GRID2-binding is calcium-independent; CBLN1 hexamers anchor GRID2 N-terminal domain dimers to monomeric NRXN1 isoform beta; promotes synaptogenesis and mediates the D-Serine-dependent long term depression signals and AMPA receptor endocytosis. The proteolytic processing to yield cerebellin seems to occur either prior to the secretion by presynaptic neurons and subsequent oligomerization or in some other location after release of the mature protein. Post-translationally, sialoglycoprotein.

It localises to the secreted. Its subcellular location is the postsynaptic cell membrane. In terms of biological role, required for synapse integrity and synaptic plasticity. During cerebellar synapse formation, essential for the matching and maintenance of pre- and post-synaptic elements at parallel fiber-Purkinje cell synapses, the establishment of the proper pattern of climbing fiber-Purkinje cell innervation, and induction of long-term depression at parallel fiber-Purkinje cell synapses. Plays a role as a synaptic organizer that acts bidirectionally on both pre- and post-synaptic components. On the one hand induces accumulation of synaptic vesicles in the pre-synaptic part by binding with NRXN1 and in other hand induces clustering of GRID2 and its associated proteins at the post-synaptic site through association of GRID2. NRXN1-CBLN1-GRID2 complex directly induces parallel fiber protrusions that encapsulate spines of Purkinje cells leading to accumulation of GRID2 and synaptic vesicles. Required for CBLN3 export from the endoplasmic reticulum and secretion. NRXN1-CBLN1-GRID2 complex mediates the D-Serine-dependent long term depression signals and AMPA receptor endocytosis. Essential for long-term maintenance but not establishment of excitatory synapses. Inhibits the formation and function of inhibitory GABAergic synapses in cerebellar Purkinje cells. Functionally, the cerebellin peptide exerts neuromodulatory functions. Directly stimulates norepinephrine release via the adenylate cyclase/PKA-dependent signaling pathway; and indirectly enhances adrenocortical secretion in vivo, through a paracrine mechanism involving medullary catecholamine release. In Bos taurus (Bovine), this protein is Cerebellin-1.